Here is a 482-residue protein sequence, read N- to C-terminus: UDP-N-acetylmuramate--L-alanine ligase (482 aa).

Residue 123-129 (GTHGKTT) coordinates ATP.

The protein belongs to the MurCDEF family.

The protein localises to the cytoplasm. The catalysed reaction is UDP-N-acetyl-alpha-D-muramate + L-alanine + ATP = UDP-N-acetyl-alpha-D-muramoyl-L-alanine + ADP + phosphate + H(+). It participates in cell wall biogenesis; peptidoglycan biosynthesis. In terms of biological role, cell wall formation. This chain is UDP-N-acetylmuramate--L-alanine ligase, found in Pseudomonas putida (strain GB-1).